The chain runs to 943 residues: Isoleucine--tRNA ligase (943 aa).

The 'HIGH' region signature appears at 58–68; the sequence is PYANGNIHIGH. Residue Glu-567 participates in L-isoleucyl-5'-AMP binding. The 'KMSKS' region motif lies at 608–612; the sequence is KMSKS. Lys-611 lines the ATP pocket. 4 residues coordinate Zn(2+): Cys-906, Cys-909, Cys-926, and Cys-929.

Belongs to the class-I aminoacyl-tRNA synthetase family. IleS type 1 subfamily. Monomer. Requires Zn(2+) as cofactor.

It is found in the cytoplasm. It carries out the reaction tRNA(Ile) + L-isoleucine + ATP = L-isoleucyl-tRNA(Ile) + AMP + diphosphate. In terms of biological role, catalyzes the attachment of isoleucine to tRNA(Ile). As IleRS can inadvertently accommodate and process structurally similar amino acids such as valine, to avoid such errors it has two additional distinct tRNA(Ile)-dependent editing activities. One activity is designated as 'pretransfer' editing and involves the hydrolysis of activated Val-AMP. The other activity is designated 'posttransfer' editing and involves deacylation of mischarged Val-tRNA(Ile). This Azotobacter vinelandii (strain DJ / ATCC BAA-1303) protein is Isoleucine--tRNA ligase.